The following is a 558-amino-acid chain: D-xylose-proton symporter-like 3, chloroplastic (558 aa).

The N-terminal 31 residues, 1-31 (MAFAVSVQSHFAIRALKRDHFKNPSPRTFCS), are a transit peptide targeting the chloroplast. 12 consecutive transmembrane segments (helical) span residues 98 to 118 (VILP…DIGA), 146 to 166 (LVVS…YGVA), 175 to 195 (LIIA…APDL), 197 to 217 (ILLV…HGAP), 238 to 258 (LFIV…IDVV), 264 to 284 (MYGF…SLPA), 359 to 379 (ALTI…PSVL), 400 to 420 (VSVI…AKVD), 426 to 446 (PLLI…SAYY), 449 to 469 (LGGF…CYQI), 491 to 511 (GISL…FAFS), and 522 to 542 (LFLL…LVVP).

It belongs to the major facilitator superfamily. Sugar transporter (TC 2.A.1.1) family.

It is found in the plastid. Its subcellular location is the chloroplast membrane. This Arabidopsis thaliana (Mouse-ear cress) protein is D-xylose-proton symporter-like 3, chloroplastic.